Here is a 155-residue protein sequence, read N- to C-terminus: Small ribosomal subunit protein uS7 (155 aa).

Belongs to the universal ribosomal protein uS7 family. In terms of assembly, part of the 30S ribosomal subunit. Contacts proteins S9 and S11.

In terms of biological role, one of the primary rRNA binding proteins, it binds directly to 16S rRNA where it nucleates assembly of the head domain of the 30S subunit. Is located at the subunit interface close to the decoding center, probably blocks exit of the E-site tRNA. In Chlorobium luteolum (strain DSM 273 / BCRC 81028 / 2530) (Pelodictyon luteolum), this protein is Small ribosomal subunit protein uS7.